Consider the following 319-residue polypeptide: tRNA dimethylallyltransferase (319 aa).

Residue 16–23 (GPTASGKS) coordinates ATP. Position 18–23 (18–23 (TASGKS)) interacts with substrate. The tract at residues 46–49 (DSMV) is interaction with substrate tRNA.

Belongs to the IPP transferase family. In terms of assembly, monomer. Requires Mg(2+) as cofactor.

It carries out the reaction adenosine(37) in tRNA + dimethylallyl diphosphate = N(6)-dimethylallyladenosine(37) in tRNA + diphosphate. In terms of biological role, catalyzes the transfer of a dimethylallyl group onto the adenine at position 37 in tRNAs that read codons beginning with uridine, leading to the formation of N6-(dimethylallyl)adenosine (i(6)A). This is tRNA dimethylallyltransferase from Cutibacterium acnes (strain DSM 16379 / KPA171202) (Propionibacterium acnes).